The sequence spans 292 residues: Ribosomal RNA small subunit methyltransferase A (292 aa).

S-adenosyl-L-methionine-binding residues include Asn46, Leu48, Gly73, Glu94, Asp118, and Asn136.

The protein belongs to the class I-like SAM-binding methyltransferase superfamily. rRNA adenine N(6)-methyltransferase family. RsmA subfamily.

It is found in the cytoplasm. The enzyme catalyses adenosine(1518)/adenosine(1519) in 16S rRNA + 4 S-adenosyl-L-methionine = N(6)-dimethyladenosine(1518)/N(6)-dimethyladenosine(1519) in 16S rRNA + 4 S-adenosyl-L-homocysteine + 4 H(+). Functionally, specifically dimethylates two adjacent adenosines (A1518 and A1519) in the loop of a conserved hairpin near the 3'-end of 16S rRNA in the 30S particle. May play a critical role in biogenesis of 30S subunits. The chain is Ribosomal RNA small subunit methyltransferase A from Deinococcus radiodurans (strain ATCC 13939 / DSM 20539 / JCM 16871 / CCUG 27074 / LMG 4051 / NBRC 15346 / NCIMB 9279 / VKM B-1422 / R1).